We begin with the raw amino-acid sequence, 1130 residues long: Tyrosine-protein kinase ABL1 (1130 aa).

Residues 1 to 60 (MLEICLKLVGCKSKKGLSSSSSCYLEEALQRPVASDFEPQGLSEAARWNSKENLLAGPSE) form a CAP region. The N-myristoyl glycine moiety is linked to residue leucine 2. Serine 50 is modified (phosphoserine). The SH3 domain maps to 61–121 (NDPNLFVALY…PSNYITPVNS (61 aa)). Phosphotyrosine; by autocatalysis is present on tyrosine 70. A phosphotyrosine mark is found at tyrosine 115, tyrosine 128, tyrosine 139, tyrosine 172, tyrosine 185, and tyrosine 215. Residues 127–217 (WYHGPVSRNA…GLITTLHYPA (91 aa)) enclose the SH2 domain. At tyrosine 226 the chain carries Phosphotyrosine; by autocatalysis. Serine 229 carries the phosphoserine modification. Positions 242 to 493 (ITMKHKLGGG…PSFAEIHQAF (252 aa)) constitute a Protein kinase domain. 248–256 (LGGGQYGEV) lines the ATP pocket. A phosphotyrosine mark is found at tyrosine 253 and tyrosine 257. Residues lysine 271 and 316–322 (EFMTYGN) contribute to the ATP site. Aspartate 363 acts as the Proton acceptor in catalysis. The Kinase activation loop signature appears at 381-405 (DFGLSRLMTGDTYTAHAGAKFPIKW). The residue at position 393 (tyrosine 393) is a Phosphotyrosine; by autocatalysis and SRC-type Tyr-kinases. A Phosphotyrosine modification is found at tyrosine 413. Residues serine 446, serine 559, and serine 569 each carry the phosphoserine modification. The tract at residues 518–996 (AVSTLLQAPE…SASSALAGDQ (479 aa)) is disordered. The span at 537–566 (RAAEHRDTTDVPEMPHSKGQGESDPLDHEP) shows a compositional bias: basic and acidic residues. Basic and acidic residues predominate over residues 586-597 (EDERLLPKDKKT). The Nuclear localization signal 1 motif lies at 605-609 (KKKKK). 2 positions are modified to phosphoserine; by PAK2: serine 618 and serine 619. Phosphoserine occurs at positions 620, 659, and 683. Residues 620–640 (SFREMDGQPERRGAGEEEGRD) are compositionally biased toward basic and acidic residues. Residues 689 to 698 (KSSTLTSSRL) show a composition bias toward polar residues. The short motif at 709-715 (SSKRFLR) is the Nuclear localization signal 2 element. Lysine 711 is modified (N6-acetyllysine; by EP300). Serine 718 bears the Phosphoserine mark. Residues threonine 735 and threonine 751 each carry the phosphothreonine modification. Over residues 740–752 (LQSTGRQFDSSTF) the composition is skewed to polar residues. Residues 755-774 (HKSEKPALPRKRAGENRSDQ) are compositionally biased toward basic and acidic residues. The Nuclear localization signal 3 signature appears at 762-769 (LPRKRAGE). Residue threonine 781 is modified to Phosphothreonine. Positions 788 to 802 (KKNEEAADEVFKDIM) are enriched in basic and acidic residues. Residues threonine 814, threonine 823, threonine 844, and threonine 852 each carry the phosphothreonine modification. Phosphoserine is present on serine 855. A DNA-binding region spans residues 869 to 968 (PAEESRVRRH…VLPATPKPQS (100 aa)). Residues 881–891 (SSESPGRDKGK) are compositionally biased toward basic and acidic residues. The segment covering 905–915 (ASAGKAGGKPS) has biased composition (low complexity). Serine 917 is modified (phosphoserine). The interval 953-1130 (EGLKKPVLPA…VKEISDIVQR (178 aa)) is F-actin-binding. Residues 965-975 (KPQSAKPSGTP) are compositionally biased toward polar residues. Position 977 is a phosphoserine (serine 977). Low complexity predominate over residues 984–993 (TLPSASSALA). A Nuclear export signal motif is present at residues 1090–1100 (LENNLRELQIC).

The protein belongs to the protein kinase superfamily. Tyr protein kinase family. ABL subfamily. As to quaternary structure, interacts with SORBS1 following insulin stimulation. Found in a trimolecular complex containing CDK5 and CABLES1. Interacts with CABLES1 and PSTPIP1. Interacts with ZDHHC16, ITGB1 and HCK. Interacts with STX17; probably phosphorylates STX17. Interacts with INPPL1/SHIP2. Interacts with the 14-3-3 proteins, YWHAB, YWHAE, YWHAG, YWHAH, SFN and YWHAZ; the interaction with 14-3-3 proteins requires phosphorylation on Thr-735 and, sequesters ABL1 into the cytoplasm. Interacts with ABI1, ABI2, BCR, CRK, FGR, FYN, HCK, LYN, PSMA7 RAD9A, RAD51, RAD52, TP73 and WASF3. A complex made of ABL1, CTTN and MYLK regulates cortical actin-based cytoskeletal rearrangement critical to sphingosine 1-phosphate (S1P)-mediated endothelial cell (EC) barrier enhancement. Interacts (via SH3 domain) with CASP9; the interaction is direct and increases in the response of cells to genotoxic stress and ABL1/c-Abl activation. Found in a complex with ABL1, ABL2, CRK and UNC119; leading to the inhibition of CRK phosphorylation by ABL kinases. Interacts with TBX21. Interacts with NEDD9/HEF1; interaction is induced by CXCL12 promotion of ABL-mediated phosphorylation of NEDD9/HEF1. It depends on Mg(2+) as a cofactor. Acetylated at Lys-711 by EP300 which promotes the cytoplasmic translocation. Post-translationally, phosphorylation at Tyr-70 by members of the SRC family of kinases disrupts SH3 domain-based autoinhibitory interactions and intermolecular associations, such as that with ABI1, and also enhances kinase activity. Phosphorylation at Tyr-226 and Tyr-393 correlate with increased activity. DNA damage-induced activation of ABL1 requires the function of ATM and Ser-446 phosphorylation. Phosphorylation at Ser-569 has been attributed to a CDC2-associated kinase and is coupled to cell division. Phosphorylation at Ser-618 and Ser-619 by PAK2 increases binding to CRK and reduces binding to ABI1. Phosphorylation on Thr-735 is required for binding 14-3-3 proteins for cytoplasmic translocation. Phosphorylated by PRKDC. In terms of processing, polyubiquitinated. Polyubiquitination of ABL1 leads to degradation. In terms of tissue distribution, widely expressed.

Its subcellular location is the cytoplasm. The protein localises to the cytoskeleton. It localises to the nucleus. The protein resides in the mitochondrion. It is found in the nucleus membrane. The enzyme catalyses L-tyrosyl-[protein] + ATP = O-phospho-L-tyrosyl-[protein] + ADP + H(+). With respect to regulation, stabilized in the inactive form by an association between the SH3 domain and the SH2-TK linker region, interactions of the N-terminal cap, and contributions from an N-terminal myristoyl group and phospholipids. Activated by autophosphorylation as well as by SRC-family kinase-mediated phosphorylation. Activated by RIN1 binding to the SH2 and SH3 domains. Also stimulated by cell death inducers and DNA-damage. Phosphatidylinositol 4,5-bisphosphate (PIP2), a highly abundant phosphoinositide known to regulate cytoskeletal and membrane proteins, also inhibits the tyrosine kinase activity. Activated by 5-(1,3-diaryl-1H-pyrazol-4-yl)hydantoin, 5-[3-(4-fluorophenyl)-1-phenyl-1H-pyrazol-4-yl]-2,4-imidazolidinedione (DPH). Inhibited by ABI1, whose activity is controlled by ABL1 itself through tyrosine phosphorylation. Also inhibited by imatinib mesylate (Gleevec) which is used for the treatment of chronic myeloid leukemia (CML), and by VX-680, an inhibitor that also acts on imatinib-resistant mutants. In terms of biological role, non-receptor tyrosine-protein kinase that plays a role in many key processes linked to cell growth and survival such as cytoskeleton remodeling in response to extracellular stimuli, cell motility and adhesion, receptor endocytosis, autophagy, DNA damage response and apoptosis. Coordinates actin remodeling through tyrosine phosphorylation of proteins controlling cytoskeleton dynamics like WASF3 (involved in branch formation); ANXA1 (involved in membrane anchoring); DBN1, DBNL, CTTN, RAPH1 and ENAH (involved in signaling); or MAPT and PXN (microtubule-binding proteins). Phosphorylation of WASF3 is critical for the stimulation of lamellipodia formation and cell migration. Involved in the regulation of cell adhesion and motility through phosphorylation of key regulators of these processes such as BCAR1, CRK, CRKL, DOK1, EFS or NEDD9. Phosphorylates multiple receptor tyrosine kinases and more particularly promotes endocytosis of EGFR, facilitates the formation of neuromuscular synapses through MUSK, inhibits PDGFRB-mediated chemotaxis and modulates the endocytosis of activated B-cell receptor complexes. Other substrates which are involved in endocytosis regulation are the caveolin (CAV1) and RIN1. Moreover, ABL1 regulates the CBL family of ubiquitin ligases that drive receptor down-regulation and actin remodeling. Phosphorylation of CBL leads to increased EGFR stability. Involved in late-stage autophagy by regulating positively the trafficking and function of lysosomal components. ABL1 targets to mitochondria in response to oxidative stress and thereby mediates mitochondrial dysfunction and cell death. In response to oxidative stress, phosphorylates serine/threonine kinase PRKD2 at 'Tyr-717'. ABL1 is also translocated in the nucleus where it has DNA-binding activity and is involved in DNA-damage response and apoptosis. Many substrates are known mediators of DNA repair: DDB1, DDB2, ERCC3, ERCC6, RAD9A, RAD51, RAD52 or WRN. Activates the proapoptotic pathway when the DNA damage is too severe to be repaired. Phosphorylates TP73, a primary regulator for this type of damage-induced apoptosis. Phosphorylates the caspase CASP9 on 'Tyr-153' and regulates its processing in the apoptotic response to DNA damage. Phosphorylates PSMA7 that leads to an inhibition of proteasomal activity and cell cycle transition blocks. ABL1 also acts as a regulator of multiple pathological signaling cascades during infection. Several known tyrosine-phosphorylated microbial proteins have been identified as ABL1 substrates. This is the case of A36R of Vaccinia virus, Tir (translocated intimin receptor) of pathogenic E.coli and possibly Citrobacter, CagA (cytotoxin-associated gene A) of H.pylori, or AnkA (ankyrin repeat-containing protein A) of A.phagocytophilum. Pathogens can highjack ABL1 kinase signaling to reorganize the host actin cytoskeleton for multiple purposes, like facilitating intracellular movement and host cell exit. Finally, functions as its own regulator through autocatalytic activity as well as through phosphorylation of its inhibitor, ABI1. Regulates T-cell differentiation in a TBX21-dependent manner. Positively regulates chemokine-mediated T-cell migration, polarization, and homing to lymph nodes and immune-challenged tissues, potentially via activation of NEDD9/HEF1 and RAP1. Phosphorylates TBX21 on tyrosine residues leading to an enhancement of its transcriptional activator activity. This Homo sapiens (Human) protein is Tyrosine-protein kinase ABL1 (ABL1).